A 131-amino-acid chain; its full sequence is Profilin-7 (131 aa).

C13 and C115 are joined by a disulfide. The short motif at 81–97 is the Involved in PIP2 interaction element; sequence AVIRGKKGAGGITIKKT. T111 bears the Phosphothreonine mark.

It belongs to the profilin family. Occurs in many kinds of cells as a complex with monomeric actin in a 1:1 ratio. Phosphorylated by MAP kinases.

The protein localises to the cytoplasm. It localises to the cytoskeleton. Its function is as follows. Binds to actin and affects the structure of the cytoskeleton. At high concentrations, profilin prevents the polymerization of actin, whereas it enhances it at low concentrations. This is Profilin-7 from Olea europaea (Common olive).